The sequence spans 420 residues: Hemojuvelin (420 aa).

The N-terminal stretch at 1–32 (MGQSPSPRSPHGSPPTLSTLTLLLLLCGQAHS) is a signal peptide. A Phosphotyrosine modification is found at Y43. An N-linked (GlcNAc...) asparagine glycan is attached at N111. The segment at 113–135 (SRQGPTAPPPARGPALPGAGPAP) is disordered. Low complexity predominate over residues 125–134 (GPALPGAGPA). 2 disulfide bridges follow: C141–C223 and C160–C310. 2 N-linked (GlcNAc...) asparagine glycosylation sites follow: N206 and N365. The GPI-anchor amidated aspartate moiety is linked to residue D393. The propeptide at 394–420 (AGPPLSPAICLVPLLSALFVLWLCFSK) is removed in mature form.

The protein belongs to the repulsive guidance molecule (RGM) family. As to quaternary structure, interacts with BMP2 and BMP4. Interacts with BMP6. Interacts with BMPR1B. Interacts with TMPRSS6. Post-translationally, autocatalytically cleaved at low pH; the two chains remain linked via two disulfide bonds. Also proteolytically processed by TMPRSS6, several fragments being released in the extracellular space; regulates HJV activity in BMP signaling and thefore iron homeostasis. As to expression, muscle cell lineage.

The protein localises to the cell membrane. In terms of biological role, acts as a bone morphogenetic protein (BMP) coreceptor. Through enhancement of BMP signaling regulates hepcidin (HAMP) expression and regulates iron homeostasis. The protein is Hemojuvelin of Mus musculus (Mouse).